The following is a 284-amino-acid chain: UTP--glucose-1-phosphate uridylyltransferase (284 aa).

The protein belongs to the UDPGP type 2 family.

The enzyme catalyses alpha-D-glucose 1-phosphate + UTP + H(+) = UDP-alpha-D-glucose + diphosphate. In Komagataeibacter xylinus (Gluconacetobacter xylinus), this protein is UTP--glucose-1-phosphate uridylyltransferase (celA).